Here is a 444-residue protein sequence, read N- to C-terminus: Phosphoglucosamine mutase (444 aa).

Residue Ser102 is the Phosphoserine intermediate of the active site. Residues Ser102, Asp241, Asp243, and Asp245 each contribute to the Mg(2+) site. At Ser102 the chain carries Phosphoserine.

It belongs to the phosphohexose mutase family. Mg(2+) serves as cofactor. Post-translationally, activated by phosphorylation.

It catalyses the reaction alpha-D-glucosamine 1-phosphate = D-glucosamine 6-phosphate. Catalyzes the conversion of glucosamine-6-phosphate to glucosamine-1-phosphate. The chain is Phosphoglucosamine mutase from Leptothrix cholodnii (strain ATCC 51168 / LMG 8142 / SP-6) (Leptothrix discophora (strain SP-6)).